The primary structure comprises 411 residues: Argininosuccinate synthase (411 aa).

Residues 15–23 (AYSGGLDTS) and Ala-42 contribute to the ATP site. Residues Tyr-93 and Ser-98 each coordinate L-citrulline. Gly-123 is an ATP binding site. 3 residues coordinate L-aspartate: Thr-125, Asn-129, and Asp-130. Asn-129 contacts L-citrulline. Residues Arg-133, Ser-185, Ser-194, Glu-270, and Tyr-282 each coordinate L-citrulline.

The protein belongs to the argininosuccinate synthase family. Type 1 subfamily. Homotetramer.

Its subcellular location is the cytoplasm. The enzyme catalyses L-citrulline + L-aspartate + ATP = 2-(N(omega)-L-arginino)succinate + AMP + diphosphate + H(+). Its pathway is amino-acid biosynthesis; L-arginine biosynthesis; L-arginine from L-ornithine and carbamoyl phosphate: step 2/3. This Psychrobacter sp. (strain PRwf-1) protein is Argininosuccinate synthase.